The following is a 179-amino-acid chain: Large ribosomal subunit protein uL6 (179 aa).

This sequence belongs to the universal ribosomal protein uL6 family. In terms of assembly, part of the 50S ribosomal subunit.

In terms of biological role, this protein binds to the 23S rRNA, and is important in its secondary structure. It is located near the subunit interface in the base of the L7/L12 stalk, and near the tRNA binding site of the peptidyltransferase center. The protein is Large ribosomal subunit protein uL6 of Akkermansia muciniphila (strain ATCC BAA-835 / DSM 22959 / JCM 33894 / BCRC 81048 / CCUG 64013 / CIP 107961 / Muc).